The sequence spans 141 residues: Large ribosomal subunit protein uL11 (141 aa).

Belongs to the universal ribosomal protein uL11 family. As to quaternary structure, part of the ribosomal stalk of the 50S ribosomal subunit. Interacts with L10 and the large rRNA to form the base of the stalk. L10 forms an elongated spine to which L12 dimers bind in a sequential fashion forming a multimeric L10(L12)X complex. One or more lysine residues are methylated.

In terms of biological role, forms part of the ribosomal stalk which helps the ribosome interact with GTP-bound translation factors. The chain is Large ribosomal subunit protein uL11 from Campylobacter concisus (strain 13826).